The chain runs to 474 residues: Cysteine--tRNA ligase (474 aa).

Residue Cys34 coordinates Zn(2+). The short motif at 36-46 (PTVYDYAHIGN) is the 'HIGH' region element. Residues Cys219, His244, and Glu248 each contribute to the Zn(2+) site. Residues 276–280 (KMSKS) carry the 'KMSKS' region motif. Lys279 provides a ligand contact to ATP.

This sequence belongs to the class-I aminoacyl-tRNA synthetase family. In terms of assembly, monomer. It depends on Zn(2+) as a cofactor.

Its subcellular location is the cytoplasm. It carries out the reaction tRNA(Cys) + L-cysteine + ATP = L-cysteinyl-tRNA(Cys) + AMP + diphosphate. This chain is Cysteine--tRNA ligase (cysS), found in Chlamydia pneumoniae (Chlamydophila pneumoniae).